A 335-amino-acid polypeptide reads, in one-letter code: Beta-hexosaminidase (335 aa).

Residues D60, R68, R133, and 163 to 164 (KH) contribute to the substrate site. Residue H176 is the Proton donor/acceptor of the active site. The Nucleophile role is filled by D247.

This sequence belongs to the glycosyl hydrolase 3 family. NagZ subfamily.

It is found in the cytoplasm. It catalyses the reaction Hydrolysis of terminal non-reducing N-acetyl-D-hexosamine residues in N-acetyl-beta-D-hexosaminides.. Its pathway is cell wall biogenesis; peptidoglycan recycling. Plays a role in peptidoglycan recycling by cleaving the terminal beta-1,4-linked N-acetylglucosamine (GlcNAc) from peptide-linked peptidoglycan fragments, giving rise to free GlcNAc, anhydro-N-acetylmuramic acid and anhydro-N-acetylmuramic acid-linked peptides. The polypeptide is Beta-hexosaminidase (Stenotrophomonas maltophilia (strain R551-3)).